Here is a 611-residue protein sequence, read N- to C-terminus: Sodium-coupled monocarboxylate transporter 1 (611 aa).

Residues methionine 1–serine 9 are Extracellular-facing. A helical transmembrane segment spans residues phenylalanine 10–isoleucine 30. The Cytoplasmic portion of the chain corresponds to tyrosine 31 to serine 51. The helical transmembrane segment at methionine 52–leucine 72 threads the bilayer. Residues glycine 73–serine 86 lie on the Extracellular side of the membrane. Residues isoleucine 87 to phenylalanine 107 form a helical membrane-spanning segment. Residues tyrosine 108–threonine 132 lie on the Cytoplasmic side of the membrane. Residues isoleucine 133 to alanine 153 traverse the membrane as a helical segment. Residues leucine 154–aspartate 161 are Extracellular-facing. A helical membrane pass occupies residues leucine 162–leucine 182. The Cytoplasmic portion of the chain corresponds to lysine 183–alanine 184. Residues valine 185–isoleucine 205 traverse the membrane as a helical segment. The Extracellular portion of the chain corresponds to glutamine 206 to arginine 239. A helical transmembrane segment spans residues histidine 240–asparagine 260. Topologically, residues glutamine 261–serine 279 are cytoplasmic. Residues leucine 280 to alanine 300 traverse the membrane as a helical segment. Residues leucine 301–glycine 336 lie on the Extracellular side of the membrane. The chain crosses the membrane as a helical span at residues valine 337 to alanine 359. The Cytoplasmic portion of the chain corresponds to leucine 360 to serine 389. Residues valine 390–leucine 410 traverse the membrane as a helical segment. Residues glutamine 411 to serine 415 lie on the Extracellular side of the membrane. The helical transmembrane segment at isoleucine 416–phenylalanine 436 threads the bilayer. The Cytoplasmic portion of the chain corresponds to alanine 437–serine 439. A helical membrane pass occupies residues isoleucine 440–alanine 460. Over glutamine 461–serine 518 the chain is Extracellular. Asparagine 485 is a glycosylation site (N-linked (GlcNAc...) asparagine). A helical transmembrane segment spans residues leucine 519–isoleucine 539. Topologically, residues serine 540–leucine 611 are cytoplasmic. Positions threonine 609–leucine 611 match the PDZ-binding motif.

The protein belongs to the sodium:solute symporter (SSF) (TC 2.A.21) family. As to quaternary structure, interacts (via PDZ-binding motif) with PDZK1 (via PDZ domains 1 and 3); interaction increases nicotinate transport activity of SLC5A8. Expressed in brain, colon, kidney and in the ileum and jejunum of small intestine. In the kidney, expression occurred in the proximal tubule and the loop of Henle, being restricted to tubular epithelial cells in both the cortex and the medulla. In the colon, predominantly expressed in the distal half of the large bowel and in the most terminal ileum. Localized selectively in the luminal surface of crypts in the large intestine and to the brush border in the middle parts of crypts in the cecum. In the brain, expression was seen throughout, exclusively in neurons, including the cortex, hippocampus, cerebellum and pituitary gland (at protein level). Expression is reduced in oligodendrogliomas.

Its subcellular location is the apical cell membrane. It carries out the reaction (S)-lactate(out) + 2 Na(+)(out) = (S)-lactate(in) + 2 Na(+)(in). The enzyme catalyses propanoate(out) + 2 Na(+)(out) = propanoate(in) + 2 Na(+)(in). It catalyses the reaction pyruvate(out) + 2 Na(+)(out) = pyruvate(in) + 2 Na(+)(in). The catalysed reaction is acetate(out) + 2 Na(+)(out) = acetate(in) + 2 Na(+)(in). It carries out the reaction butanoate(out) + 2 Na(+)(out) = butanoate(in) + 2 Na(+)(in). The enzyme catalyses nicotinate(out) + 2 Na(+)(out) = nicotinate(in) + 2 Na(+)(in). It catalyses the reaction (R)-3-hydroxybutanoate(out) + 2 Na(+)(out) = (R)-3-hydroxybutanoate(in) + 2 Na(+)(in). The catalysed reaction is acetoacetate(out) + 2 Na(+)(out) = acetoacetate(in) + 2 Na(+)(in). It carries out the reaction 4-methyl-2-oxopentanoate(out) + 2 Na(+)(out) = 4-methyl-2-oxopentanoate(in) + 2 Na(+)(in). The enzyme catalyses 5-oxo-L-proline(out) + 2 Na(+)(out) = 5-oxo-L-proline(in) + 2 Na(+)(in). It catalyses the reaction iodide(out) = iodide(in). The catalysed reaction is chloride(in) = chloride(out). It carries out the reaction nitrate(in) = nitrate(out). The enzyme catalyses bromide(in) = bromide(out). Its activity is regulated as follows. Transport of D-lactate and pyruvate stimulated by alpha-cyano-4-hydroxycinnamic acid, but inhibited by the short-chain fatty acids acetate, propionate and butyrate. In terms of biological role, acts as an electrogenic sodium (Na(+)) and chloride (Cl-)-dependent sodium-coupled solute transporter, including transport of monocarboxylates (short-chain fatty acids including L-lactate, D-lactate, pyruvate, acetate, propionate, valerate and butyrate), mocarboxylate drugs (nicotinate, benzoate, salicylate and 5-aminosalicylate) and ketone bodies (beta-D-hydroxybutyrate, acetoacetate and alpha-ketoisocaproate), with a Na(+):substrate stoichiometry of between 4:1 and 2:1. Catalyzes passive carrier mediated diffusion of iodide. Mediates iodide transport from the thyrocyte into the colloid lumen through the apical membrane. May be responsible for the absorption of D-lactate and monocarboxylate drugs from the intestinal tract. May play a critical role in the entry of L-lactate and ketone bodies into neurons by a process driven by an electrochemical Na(+) gradient and hence contribute to the maintenance of the energy status and function of neurons. Mediates sodium-coupled electrogenic transport of pyroglutamate (5-oxo-L-proline). Can mediate the transport of chloride, bromide, iodide and nitrate ions when external concentration of sodium ions is reduced. This Mus musculus (Mouse) protein is Sodium-coupled monocarboxylate transporter 1.